A 126-amino-acid chain; its full sequence is Aspartate 1-decarboxylase (126 aa).

Ser-25 (schiff-base intermediate with substrate; via pyruvic acid) is an active-site residue. Ser-25 bears the Pyruvic acid (Ser) mark. Thr-57 contacts substrate. The active-site Proton donor is the Tyr-58. A substrate-binding site is contributed by 73–75 (GSA).

This sequence belongs to the PanD family. In terms of assembly, heterooctamer of four alpha and four beta subunits. The cofactor is pyruvate. In terms of processing, is synthesized initially as an inactive proenzyme, which is activated by self-cleavage at a specific serine bond to produce a beta-subunit with a hydroxyl group at its C-terminus and an alpha-subunit with a pyruvoyl group at its N-terminus.

The protein resides in the cytoplasm. It catalyses the reaction L-aspartate + H(+) = beta-alanine + CO2. It functions in the pathway cofactor biosynthesis; (R)-pantothenate biosynthesis; beta-alanine from L-aspartate: step 1/1. Its function is as follows. Catalyzes the pyruvoyl-dependent decarboxylation of aspartate to produce beta-alanine. The chain is Aspartate 1-decarboxylase from Chromobacterium violaceum (strain ATCC 12472 / DSM 30191 / JCM 1249 / CCUG 213 / NBRC 12614 / NCIMB 9131 / NCTC 9757 / MK).